Reading from the N-terminus, the 532-residue chain is 2,3-bisphosphoglycerate-independent phosphoglycerate mutase (532 aa).

Residues Asp-15 and Ser-65 each contribute to the Mn(2+) site. The active-site Phosphoserine intermediate is Ser-65. Substrate contacts are provided by residues His-126, 156-157 (RD), Arg-188, Arg-194, 258-261 (RPDR), and Lys-331. Mn(2+) is bound by residues Asp-398, His-402, Asp-439, His-440, and His-457.

Belongs to the BPG-independent phosphoglycerate mutase family. In terms of assembly, monomer. Mn(2+) serves as cofactor.

The catalysed reaction is (2R)-2-phosphoglycerate = (2R)-3-phosphoglycerate. Its pathway is carbohydrate degradation; glycolysis; pyruvate from D-glyceraldehyde 3-phosphate: step 3/5. Catalyzes the interconversion of 2-phosphoglycerate and 3-phosphoglycerate. The chain is 2,3-bisphosphoglycerate-independent phosphoglycerate mutase from Synechococcus elongatus (strain ATCC 33912 / PCC 7942 / FACHB-805) (Anacystis nidulans R2).